The following is a 90-amino-acid chain: Co-chaperonin GroES (90 aa).

Belongs to the GroES chaperonin family. Heptamer of 7 subunits arranged in a ring. Interacts with the chaperonin GroEL.

It is found in the cytoplasm. Its function is as follows. Together with the chaperonin GroEL, plays an essential role in assisting protein folding. The GroEL-GroES system forms a nano-cage that allows encapsulation of the non-native substrate proteins and provides a physical environment optimized to promote and accelerate protein folding. GroES binds to the apical surface of the GroEL ring, thereby capping the opening of the GroEL channel. This Bacteroides thetaiotaomicron (strain ATCC 29148 / DSM 2079 / JCM 5827 / CCUG 10774 / NCTC 10582 / VPI-5482 / E50) protein is Co-chaperonin GroES.